The following is a 142-amino-acid chain: Protein OrfX1 (142 aa).

This sequence belongs to the TULIP P47 family. As to quaternary structure, orfX1 was not detected as part of a crude toxin extract that includes BoNTA2/NTNH, P47, OrfX2 and OrfX3.

Its function is as follows. Part of a botulinum neurotoxin type A2 (BoNT) locus; may be part of a progenitor toxin complex required to protect BoNT during its passage through the host gastrointestinal tract. Binds phosphatidylinositol (3,4) bisphosphate, phosphatidylethanolamine and phosphatidylserine. The sequence is that of Protein OrfX1 (orfX1) from Clostridium botulinum (strain Kyoto / Type A2).